The primary structure comprises 365 residues: Ribosomal RNA large subunit methyltransferase M (365 aa).

Residues Ser-193, 226–229 (CPGG), Asp-245, Asp-265, and Asp-282 each bind S-adenosyl-L-methionine. The active-site Proton acceptor is Lys-311.

The protein belongs to the class I-like SAM-binding methyltransferase superfamily. RNA methyltransferase RlmE family. RlmM subfamily. Monomer.

Its subcellular location is the cytoplasm. The catalysed reaction is cytidine(2498) in 23S rRNA + S-adenosyl-L-methionine = 2'-O-methylcytidine(2498) in 23S rRNA + S-adenosyl-L-homocysteine + H(+). Functionally, catalyzes the 2'-O-methylation at nucleotide C2498 in 23S rRNA. This chain is Ribosomal RNA large subunit methyltransferase M, found in Alteromonas mediterranea (strain DSM 17117 / CIP 110805 / LMG 28347 / Deep ecotype).